Here is a 497-residue protein sequence, read N- to C-terminus: Serine hydroxymethyltransferase, mitochondrial (497 aa).

The N-terminal 27 residues, 1 to 27 (MFIRRLHTSSRRLTCGEALRACQQTGA), are a transit peptide targeting the mitochondrion. Lys-272 carries the post-translational modification N6-(pyridoxal phosphate)lysine.

Belongs to the SHMT family. In terms of assembly, homotetramer. Requires pyridoxal 5'-phosphate as cofactor.

It is found in the mitochondrion. The enzyme catalyses (6R)-5,10-methylene-5,6,7,8-tetrahydrofolate + glycine + H2O = (6S)-5,6,7,8-tetrahydrofolate + L-serine. Its pathway is one-carbon metabolism; tetrahydrofolate interconversion. Interconversion of serine and glycine. This chain is Serine hydroxymethyltransferase, mitochondrial (SHM1), found in Eremothecium gossypii (strain ATCC 10895 / CBS 109.51 / FGSC 9923 / NRRL Y-1056) (Yeast).